Reading from the N-terminus, the 82-residue chain is ATP synthase subunit c, chloroplastic (82 aa).

Transmembrane regions (helical) follow at residues 7–27 (AASV…PGIG) and 57–77 (LAFM…LLFA).

Belongs to the ATPase C chain family. As to quaternary structure, F-type ATPases have 2 components, F(1) - the catalytic core - and F(0) - the membrane proton channel. F(1) has five subunits: alpha(3), beta(3), gamma(1), delta(1), epsilon(1). F(0) has four main subunits: a(1), b(1), b'(1) and c(10-14). The alpha and beta chains form an alternating ring which encloses part of the gamma chain. F(1) is attached to F(0) by a central stalk formed by the gamma and epsilon chains, while a peripheral stalk is formed by the delta, b and b' chains.

Its subcellular location is the plastid. It localises to the chloroplast thylakoid membrane. Its function is as follows. F(1)F(0) ATP synthase produces ATP from ADP in the presence of a proton or sodium gradient. F-type ATPases consist of two structural domains, F(1) containing the extramembraneous catalytic core and F(0) containing the membrane proton channel, linked together by a central stalk and a peripheral stalk. During catalysis, ATP synthesis in the catalytic domain of F(1) is coupled via a rotary mechanism of the central stalk subunits to proton translocation. Key component of the F(0) channel; it plays a direct role in translocation across the membrane. A homomeric c-ring of between 10-14 subunits forms the central stalk rotor element with the F(1) delta and epsilon subunits. The sequence is that of ATP synthase subunit c, chloroplastic from Porphyra purpurea (Red seaweed).